We begin with the raw amino-acid sequence, 224 residues long: Paired immunoglobulin-like type 2 receptor beta (224 aa).

An N-terminal signal peptide occupies residues 1–28 (MALLISLPGGTPAMAQVLLLLSSGCLHA). Residues 29–195 (GNSERYNRKN…NPSLMNLGAM (167 aa)) are Extracellular-facing. N-linked (GlcNAc...) asparagine glycans are attached at residues asparagine 90, asparagine 107, and asparagine 154. The helical transmembrane segment at 196-216 (VTMLLAKVLVIVLVYGWMIFL) threads the bilayer. Over 217-224 (RWKQRPAH) the chain is Cytoplasmic.

Interacts with CD99. Probably associates with DAP12. As to expression, widely expressed with highest levels in spleen, liver and lung. Predominantly expressed by natural killer cells, macrophages, and granulocytes and dendritic cells (BM-DC).

The protein resides in the membrane. Functionally, paired receptors consist of highly related activating and inhibitory receptors and are widely involved in the regulation of the immune system. PILRB is thought to act as a cellular signaling activating receptor that associates with ITAM-bearing adapter molecules on the cell surface. Seems to associate with DAP12 and is a receptor for CD99. May be involved in target cell recognition by natural killer cells and in activation of dendritic cells. The chain is Paired immunoglobulin-like type 2 receptor beta (Pilrb) from Mus musculus (Mouse).